Here is a 164-residue protein sequence, read N- to C-terminus: Peptide deformylase (164 aa).

2 residues coordinate Fe cation: Cys87 and His129. Glu130 is a catalytic residue. Residue His133 coordinates Fe cation.

Belongs to the polypeptide deformylase family. Requires Fe(2+) as cofactor.

It carries out the reaction N-terminal N-formyl-L-methionyl-[peptide] + H2O = N-terminal L-methionyl-[peptide] + formate. In terms of biological role, removes the formyl group from the N-terminal Met of newly synthesized proteins. Requires at least a dipeptide for an efficient rate of reaction. N-terminal L-methionine is a prerequisite for activity but the enzyme has broad specificity at other positions. This chain is Peptide deformylase, found in Thermotoga petrophila (strain ATCC BAA-488 / DSM 13995 / JCM 10881 / RKU-1).